Consider the following 537-residue polypeptide: Nedd4 binding protein 3 (537 aa).

S172 carries the post-translational modification Phosphoserine. Disordered regions lie at residues 173 to 234 (LDEG…VLSC), 327 to 359 (RKELRAQQGLAPEPRTSGPPMEADPNARPEEEA), and 422 to 456 (LQEQAPREEAPGSCETDDCKSRGLLGEAGGNEARE). Residues 178 to 207 (PEPSLSDSSSGGSFGRSPGTGPSPFSSSLG) show a composition bias toward low complexity. A coiled-coil region spans residues 295–523 (VDRLHEVAQK…LEQELRVLRE (229 aa)).

This sequence belongs to the N4BP3 family. In terms of assembly, binds NEDD4. Interacts with 14-3-3 proteins. Interacts with MAVS.

The protein resides in the cytoplasmic vesicle. It is found in the cell projection. The protein localises to the axon. Its subcellular location is the dendrite. Its function is as follows. Plays a positive role in the antiviral innate immune signaling pathway. Mechanistically, interacts with MAVS and functions as a positive regulator to promote 'Lys-63'-linked polyubiquitination of MAVS and thus strengthens the interaction between MAVS and TRAF2. Also plays a role in axon and dendrite arborization during cranial nerve development. May also be important for neural crest migration and early development of other anterior structures including eye, brain and cranial cartilage. The protein is Nedd4 binding protein 3 of Rattus norvegicus (Rat).